The chain runs to 344 residues: MESSSVDESTTSTGSICETPAITPAKKSSVGNLYRMGSGSSVVLDSENGVEAESRKLPSSKYKGVVPQPNGRWGAQIYEKHQRVWLGTFNEEDEAARAYDVAVHRFRRRDAVTNFKDVKMDEDEVDFLNSHSKSEIVDMLRKHTYNEELEQSKRRRNGNGNMTRTLLTSGLSNDGVSTTGFRSAEALFEKAVTPSDVGKLNRLVIPKHHAEKHFPLPSSNVSVKGVLLNFEDVNGKVWRFRYSYWNSSQSYVLTKGWSRFVKEKNLRAGDVVSFSRSNGQDQQLYIGWKSRSGSDLDAGRVLRLFGVNISPESSRNDVVGNKRVNDTEMLSLVCSKKQRIFHAS.

Positions 1–15 (MESSSVDESTTSTGS) are enriched in low complexity. The interval 1-22 (MESSSVDESTTSTGSICETPAI) is disordered. The AP2/ERF DNA-binding region spans 61-116 (KYKGVVPQPNGRWGAQIYEKHQRVWLGTFNEEDEAARAYDVAVHRFRRRDAVTNFK). A disordered region spans residues 148 to 169 (ELEQSKRRRNGNGNMTRTLLTS). A DNA-binding region (TF-B3) is located at residues 188–292 (FEKAVTPSDV…QLYIGWKSRS (105 aa)).

This sequence belongs to the AP2/ERF transcription factor family. RAV subfamily. Monomer. In terms of tissue distribution, expressed in all tissues examined: Roots, rosette leaves, cauline leaves, inflorescence stems, flowers and siliques. Highest expression in roots and rosette leaves. Very low expression in flowers.

The protein localises to the nucleus. Functionally, binds specifically to bipartite recognition sequences composed of two unrelated motifs, 5'-CAACA-3' and 5'-CACCTG-3'. May function as negative regulator of plant growth and development. The chain is AP2/ERF and B3 domain-containing transcription factor RAV1 (RAV1) from Arabidopsis thaliana (Mouse-ear cress).